The following is a 190-amino-acid chain: Small ribosomal subunit protein uS5 (190 aa).

One can recognise an S5 DRBM domain in the interval 22–85; it reads FVDKLVHINR…DSAKRNLTRV (64 aa).

This sequence belongs to the universal ribosomal protein uS5 family. In terms of assembly, part of the 30S ribosomal subunit. Contacts proteins S4 and S8.

With S4 and S12 plays an important role in translational accuracy. Its function is as follows. Located at the back of the 30S subunit body where it stabilizes the conformation of the head with respect to the body. In Bradyrhizobium sp. (strain BTAi1 / ATCC BAA-1182), this protein is Small ribosomal subunit protein uS5.